Here is a 622-residue protein sequence, read N- to C-terminus: UvrABC system protein C (622 aa).

The 80-residue stretch at 13–92 folds into the GIY-YIG domain; it reads DKPGVYLMKN…IKKYRPRYNI (80 aa). A UVR domain is found at 204–239; that stretch reads KDIIRKLKEDMDTLSENMEFEKAAELRDKIFALEKI.

Belongs to the UvrC family. Interacts with UvrB in an incision complex.

It localises to the cytoplasm. Functionally, the UvrABC repair system catalyzes the recognition and processing of DNA lesions. UvrC both incises the 5' and 3' sides of the lesion. The N-terminal half is responsible for the 3' incision and the C-terminal half is responsible for the 5' incision. The sequence is that of UvrABC system protein C from Clostridium kluyveri (strain ATCC 8527 / DSM 555 / NBRC 12016 / NCIMB 10680 / K1).